The chain runs to 688 residues: MIDRYKHQQLRIGSVSPQQITAWANKILPNGEIVGEVTKPYTFHYKTNKPEKDGLFCERIFGPIKSGICACGNYRVIGDEKEDPKFCEQCGVEFVDSRIRRYQMGYIKLACPVTHVWYLKRLPSYIANLLDKPLKELEGLVYCDVYPNFSFARPIAKKPTFLRLRGSFEYEIQSWKYSIPLFFTTQGFDTFRNREISTGAGAIREQLADPDLRTITDHSLVEWKELGEKGSTGNEWEDRKIGRRKDFLVRRLELAKNLIRTNVEPEWMVLRLLPVLPPELRPIIQIDGGKPMSSDINELYRRVIYRNNTLTDPLTTSRSTPGESVMCQEKLVQEAVDTLLDNGIRGQPMKDGHNKVYKSFSDVIEGKEGRFRETLLGKRVDYSGRSVIVVGPSLSLHRCGLPREIAIELFQTFVIRGLIRQHVASNIGIAKSKIREKEPIVWEILQEVMQGHPVLLNRAPTLHRLGIQAFQPILVEGRAICLHPLVRKGFNADFDGDQMAVHVPLSLEAQAEACLLMFSHMNLLSPTIGDPISVPTQDMLIGLYVLTIGNRRGICANRYNPCNCRNDNDQNETVDDNNYKYTKEKEPYFCSSYDALGAYRQKRIHLDSPLWLRWRLDQRVIASREVPIEVQYESSGTHHEIYGHYLIVRSVKKEILCIYIRTTVGHISFYREIEEAIQGFCRAYSYGT.

C69, C71, C87, and C90 together coordinate Zn(2+). Residues D493, D495, and D497 each contribute to the Mg(2+) site.

It belongs to the RNA polymerase beta' chain family. RpoC1 subfamily. In plastids the minimal PEP RNA polymerase catalytic core is composed of four subunits: alpha, beta, beta', and beta''. When a (nuclear-encoded) sigma factor is associated with the core the holoenzyme is formed, which can initiate transcription. Mg(2+) serves as cofactor. It depends on Zn(2+) as a cofactor.

It is found in the plastid. It localises to the chloroplast. It carries out the reaction RNA(n) + a ribonucleoside 5'-triphosphate = RNA(n+1) + diphosphate. In terms of biological role, DNA-dependent RNA polymerase catalyzes the transcription of DNA into RNA using the four ribonucleoside triphosphates as substrates. The chain is DNA-directed RNA polymerase subunit beta' from Chloranthus spicatus (Chulantree).